A 203-amino-acid chain; its full sequence is uncharacterized protein (203 aa).

3 consecutive transmembrane segments (helical) span residues 60 to 80 (IIDM…FFLY), 114 to 134 (WFQL…YFCT), and 157 to 177 (LQLG…ALIL). 192–199 (GAMSEGKT) contacts ATP.

The protein localises to the membrane. This is an uncharacterized protein from Saccharomyces cerevisiae (strain ATCC 204508 / S288c) (Baker's yeast).